The chain runs to 570 residues: Formate--tetrahydrofolate ligase (570 aa).

65 to 72 is a binding site for ATP; the sequence is TPFGEGKT.

The protein belongs to the formate--tetrahydrofolate ligase family.

The catalysed reaction is (6S)-5,6,7,8-tetrahydrofolate + formate + ATP = (6R)-10-formyltetrahydrofolate + ADP + phosphate. Its pathway is one-carbon metabolism; tetrahydrofolate interconversion. In Shewanella sediminis (strain HAW-EB3), this protein is Formate--tetrahydrofolate ligase.